The chain runs to 544 residues: CTP synthase (544 aa).

The amidoligase domain stretch occupies residues 1–267; sequence MSKFIFVTGG…GDLLVSRLHL (267 aa). Residue serine 13 coordinates CTP. Serine 13 contributes to the UTP binding site. ATP is bound at residue 14 to 19; that stretch reads SVGKGI. Tyrosine 54 contributes to the L-glutamine binding site. Residue aspartate 71 participates in ATP binding. Residues aspartate 71 and glutamate 141 each contribute to the Mg(2+) site. CTP contacts are provided by residues 148–150, 188–193, and lysine 224; these read DIE and KTKPTQ. UTP contacts are provided by residues 188 to 193 and lysine 224; that span reads KTKPTQ. In terms of domain architecture, Glutamine amidotransferase type-1 spans 299 to 534; the sequence is YVELKDAYYS…INAAKKVIRD (236 aa). Glycine 354 contributes to the L-glutamine binding site. Residue cysteine 381 is the Nucleophile; for glutamine hydrolysis of the active site. L-glutamine contacts are provided by residues 382 to 385, glutamate 405, and arginine 462; that span reads LGMQ. Residues histidine 507 and glutamate 509 contribute to the active site.

Belongs to the CTP synthase family. Homotetramer.

The enzyme catalyses UTP + L-glutamine + ATP + H2O = CTP + L-glutamate + ADP + phosphate + 2 H(+). It carries out the reaction L-glutamine + H2O = L-glutamate + NH4(+). The catalysed reaction is UTP + NH4(+) + ATP = CTP + ADP + phosphate + 2 H(+). It participates in pyrimidine metabolism; CTP biosynthesis via de novo pathway; CTP from UDP: step 2/2. Its activity is regulated as follows. Allosterically activated by GTP, when glutamine is the substrate; GTP has no effect on the reaction when ammonia is the substrate. The allosteric effector GTP functions by stabilizing the protein conformation that binds the tetrahedral intermediate(s) formed during glutamine hydrolysis. Inhibited by the product CTP, via allosteric rather than competitive inhibition. In terms of biological role, catalyzes the ATP-dependent amination of UTP to CTP with either L-glutamine or ammonia as the source of nitrogen. Regulates intracellular CTP levels through interactions with the four ribonucleotide triphosphates. This chain is CTP synthase, found in Dehalococcoides mccartyi (strain ATCC BAA-2100 / JCM 16839 / KCTC 5957 / BAV1).